We begin with the raw amino-acid sequence, 471 residues long: Galactolipase DONGLE, chloroplastic (471 aa).

The transit peptide at 1 to 88 (MAAKVFTQNP…PLSRVWREIQ (88 aa)) directs the protein to the chloroplast. The tract at residues 44 to 71 (SSSTMSPPISSSPLSLPSSSSSQAIPPS) is disordered. Positions 284 to 288 (GHSMG) match the GXSXG motif. Ser-286 acts as the Acyl-ester intermediate in catalysis. Residues Asp-349 and His-400 each act as charge relay system in the active site.

Belongs to the AB hydrolase superfamily. Lipase family. As to expression, expressed in leaves and seedlings. Not detected in flowers, siliques or roots.

It is found in the plastid. It localises to the chloroplast. It carries out the reaction a 1,2-diacyl-3-O-(beta-D-galactosyl)-sn-glycerol + 2 H2O = 3-beta-D-galactosyl-sn-glycerol + 2 a fatty acid + 2 H(+). It catalyses the reaction a 1,2-diacyl-sn-glycero-3-phosphocholine + H2O = a 2-acyl-sn-glycero-3-phosphocholine + a fatty acid + H(+). The enzyme catalyses a 1,2-diacyl-3-O-[alpha-D-galactosyl-(1-&gt;6)-beta-D-galactosyl]-sn-glycerol + H2O = acyl-3-O-[alpha-D-galactosyl-(1-&gt;6)-beta-D-galactosyl]-sn-glycerol + a fatty acid + H(+). Sn-1-specific phospholipase that releases free fatty acids from phosphatidylcholine. Has a higher galactolipase activity than phospholipase A1 activity when digalactosyldiacylglycerol (DGDG) is used as substrate. Catalyzes the initial step of jasmonic acid biosynthesis. Required for the biosynthesis of basal-level endogenous jasmonate in vegetative tissues. Regulates leaves growth. Not essential for jasmonate biosynthesis after wounding or upon pathogen infection. The chain is Galactolipase DONGLE, chloroplastic from Arabidopsis thaliana (Mouse-ear cress).